The following is a 153-amino-acid chain: Ribosome maturation factor RimP (153 aa).

This sequence belongs to the RimP family.

The protein localises to the cytoplasm. Functionally, required for maturation of 30S ribosomal subunits. This is Ribosome maturation factor RimP from Histophilus somni (strain 2336) (Haemophilus somnus).